Consider the following 143-residue polypeptide: SsrA-binding protein (143 aa).

Belongs to the SmpB family.

The protein localises to the cytoplasm. Its function is as follows. Required for rescue of stalled ribosomes mediated by trans-translation. Binds to transfer-messenger RNA (tmRNA), required for stable association of tmRNA with ribosomes. tmRNA and SmpB together mimic tRNA shape, replacing the anticodon stem-loop with SmpB. tmRNA is encoded by the ssrA gene; the 2 termini fold to resemble tRNA(Ala) and it encodes a 'tag peptide', a short internal open reading frame. During trans-translation Ala-aminoacylated tmRNA acts like a tRNA, entering the A-site of stalled ribosomes, displacing the stalled mRNA. The ribosome then switches to translate the ORF on the tmRNA; the nascent peptide is terminated with the 'tag peptide' encoded by the tmRNA and targeted for degradation. The ribosome is freed to recommence translation, which seems to be the essential function of trans-translation. This Deinococcus radiodurans (strain ATCC 13939 / DSM 20539 / JCM 16871 / CCUG 27074 / LMG 4051 / NBRC 15346 / NCIMB 9279 / VKM B-1422 / R1) protein is SsrA-binding protein.